The chain runs to 185 residues: ATP-dependent protease subunit HslV (185 aa).

Threonine 2 is an active-site residue. Glycine 157, cysteine 160, and threonine 163 together coordinate Na(+).

The protein belongs to the peptidase T1B family. HslV subfamily. A double ring-shaped homohexamer of HslV is capped on each side by a ring-shaped HslU homohexamer. The assembly of the HslU/HslV complex is dependent on binding of ATP.

The protein resides in the cytoplasm. The enzyme catalyses ATP-dependent cleavage of peptide bonds with broad specificity.. Allosterically activated by HslU binding. Functionally, protease subunit of a proteasome-like degradation complex believed to be a general protein degrading machinery. The sequence is that of ATP-dependent protease subunit HslV from Vibrio cholerae serotype O1 (strain ATCC 39315 / El Tor Inaba N16961).